A 607-amino-acid chain; its full sequence is Elongation factor 4 (607 aa).

In terms of domain architecture, tr-type G spans 11–193 (SKIRNFSIIA…QIVEKVPAPT (183 aa)). GTP contacts are provided by residues 23-28 (DHGKST) and 140-143 (NKID).

It belongs to the TRAFAC class translation factor GTPase superfamily. Classic translation factor GTPase family. LepA subfamily.

It localises to the cell membrane. It carries out the reaction GTP + H2O = GDP + phosphate + H(+). Required for accurate and efficient protein synthesis under certain stress conditions. May act as a fidelity factor of the translation reaction, by catalyzing a one-codon backward translocation of tRNAs on improperly translocated ribosomes. Back-translocation proceeds from a post-translocation (POST) complex to a pre-translocation (PRE) complex, thus giving elongation factor G a second chance to translocate the tRNAs correctly. Binds to ribosomes in a GTP-dependent manner. The chain is Elongation factor 4 from Bacillus cereus (strain ATCC 10987 / NRS 248).